A 432-amino-acid polypeptide reads, in one-letter code: Enolase (432 aa).

Gln-167 contributes to the (2R)-2-phosphoglycerate binding site. Glu-209 functions as the Proton donor in the catalytic mechanism. Residues Asp-246, Glu-291, and Asp-318 each coordinate Mg(2+). Residues Lys-343, Arg-372, Ser-373, and Lys-394 each coordinate (2R)-2-phosphoglycerate. The active-site Proton acceptor is Lys-343.

This sequence belongs to the enolase family. As to quaternary structure, component of the RNA degradosome, a multiprotein complex involved in RNA processing and mRNA degradation. It depends on Mg(2+) as a cofactor.

The protein localises to the cytoplasm. Its subcellular location is the secreted. It localises to the cell surface. It carries out the reaction (2R)-2-phosphoglycerate = phosphoenolpyruvate + H2O. It functions in the pathway carbohydrate degradation; glycolysis; pyruvate from D-glyceraldehyde 3-phosphate: step 4/5. Its function is as follows. Catalyzes the reversible conversion of 2-phosphoglycerate (2-PG) into phosphoenolpyruvate (PEP). It is essential for the degradation of carbohydrates via glycolysis. The sequence is that of Enolase from Aliivibrio fischeri (strain ATCC 700601 / ES114) (Vibrio fischeri).